Consider the following 589-residue polypeptide: O-fucosyltransferase 11 (589 aa).

Residues 1–37 are disordered; the sequence is MKSKIHHQPNGSNNGVVSSNDNGCRSESPSPPLSPNR. Over residues 10–23 the composition is skewed to low complexity; it reads NGSNNGVVSSNDNG. Residues 68–88 traverse the membrane as a helical; Signal-anchor for type II membrane protein segment; that stretch reads MIYASGLLMCVGPFSGLVGWV. N112, N136, and N239 each carry an N-linked (GlcNAc...) asparagine glycan. 332–334 lines the substrate pocket; the sequence is HLR. 3 N-linked (GlcNAc...) asparagine glycosylation sites follow: N405, N406, and N564.

The protein belongs to the glycosyltransferase GT106 family.

Its subcellular location is the membrane. Its pathway is glycan metabolism. The chain is O-fucosyltransferase 11 from Arabidopsis thaliana (Mouse-ear cress).